A 102-amino-acid chain; its full sequence is Large ribosomal subunit protein uL24 (102 aa).

This sequence belongs to the universal ribosomal protein uL24 family. As to quaternary structure, part of the 50S ribosomal subunit.

Functionally, one of two assembly initiator proteins, it binds directly to the 5'-end of the 23S rRNA, where it nucleates assembly of the 50S subunit. One of the proteins that surrounds the polypeptide exit tunnel on the outside of the subunit. The chain is Large ribosomal subunit protein uL24 from Limosilactobacillus reuteri (strain DSM 20016) (Lactobacillus reuteri).